The primary structure comprises 323 residues: SPbeta prophage-derived uncharacterized protein YorG (323 aa).

Residues 222-272 (TAENLEKAIIEAVERQEQAEGIVAVTYEEQKQNNASEELDFNSLMDQIKEI) adopt a coiled-coil conformation.

This chain is SPbeta prophage-derived uncharacterized protein YorG (yorG), found in Bacillus subtilis (strain 168).